The following is a 155-amino-acid chain: Chaperone protein IpgC (155 aa).

The protein belongs to the LcrH/SycD chaperone family.

Its subcellular location is the cytoplasm. Functionally, assists the correct folding of nascent IpaB. Once it is bound to IpaB, it binds to IpaC and impedes their premature association that would lead to their degradation in the absence of IpcG. In Shigella dysenteriae, this protein is Chaperone protein IpgC (ipgC).